Consider the following 379-residue polypeptide: Cytochrome b (379 aa).

A run of 4 helical transmembrane segments spans residues 33–53, 77–98, 113–133, and 178–198; these read FGSLLGMCLMIQILTGLFLAM, WLIRYLHANGASMFFICLFIHV, WNIGIILFLTTMATAFVGYVL, and FFAFHFILPFIITAFVLVHLL. His-83 and His-97 together coordinate heme b. His-182 and His-196 together coordinate heme b. An a ubiquinone-binding site is contributed by His-201. The next 4 helical transmembrane spans lie at 226-246, 288-308, 320-340, and 347-367; these read IKDLLGILFLLTALMILALFF, LGGVLALLLSILILMAFPLLN, ITQTIYWILIANLLVLTWIGG, and FTMIGQIASITYFAIILILXP.

Belongs to the cytochrome b family. In terms of assembly, the cytochrome bc1 complex contains 11 subunits: 3 respiratory subunits (MT-CYB, CYC1 and UQCRFS1), 2 core proteins (UQCRC1 and UQCRC2) and 6 low-molecular weight proteins (UQCRH/QCR6, UQCRB/QCR7, UQCRQ/QCR8, UQCR10/QCR9, UQCR11/QCR10 and a cleavage product of UQCRFS1). This cytochrome bc1 complex then forms a dimer. It depends on heme b as a cofactor.

It is found in the mitochondrion inner membrane. Functionally, component of the ubiquinol-cytochrome c reductase complex (complex III or cytochrome b-c1 complex) that is part of the mitochondrial respiratory chain. The b-c1 complex mediates electron transfer from ubiquinol to cytochrome c. Contributes to the generation of a proton gradient across the mitochondrial membrane that is then used for ATP synthesis. This Akodon toba (Chaco grass mouse) protein is Cytochrome b (MT-CYB).